The sequence spans 266 residues: Ribosomal RNA small subunit methyltransferase A (266 aa).

The S-adenosyl-L-methionine site is built by Asn13, Leu15, Gly40, Glu61, Asp86, and Asn110.

This sequence belongs to the class I-like SAM-binding methyltransferase superfamily. rRNA adenine N(6)-methyltransferase family. RsmA subfamily.

Its subcellular location is the cytoplasm. The enzyme catalyses adenosine(1518)/adenosine(1519) in 16S rRNA + 4 S-adenosyl-L-methionine = N(6)-dimethyladenosine(1518)/N(6)-dimethyladenosine(1519) in 16S rRNA + 4 S-adenosyl-L-homocysteine + 4 H(+). Specifically dimethylates two adjacent adenosines (A1518 and A1519) in the loop of a conserved hairpin near the 3'-end of 16S rRNA in the 30S particle. May play a critical role in biogenesis of 30S subunits. The sequence is that of Ribosomal RNA small subunit methyltransferase A from Hydrogenovibrio crunogenus (strain DSM 25203 / XCL-2) (Thiomicrospira crunogena).